The following is a 136-amino-acid chain: Nucleoside diphosphate kinase (136 aa).

The ATP site is built by K10, F58, R86, T92, R104, and N114. The active-site Pros-phosphohistidine intermediate is H117.

The protein belongs to the NDK family. Homotetramer. The cofactor is Mg(2+).

The protein resides in the cytoplasm. It catalyses the reaction a 2'-deoxyribonucleoside 5'-diphosphate + ATP = a 2'-deoxyribonucleoside 5'-triphosphate + ADP. The enzyme catalyses a ribonucleoside 5'-diphosphate + ATP = a ribonucleoside 5'-triphosphate + ADP. In terms of biological role, major role in the synthesis of nucleoside triphosphates other than ATP. The ATP gamma phosphate is transferred to the NDP beta phosphate via a ping-pong mechanism, using a phosphorylated active-site intermediate. This is Nucleoside diphosphate kinase from Mycobacterium leprae (strain TN).